A 368-amino-acid chain; its full sequence is Agmatine deiminase (368 aa).

Cys-357 serves as the catalytic Amidino-cysteine intermediate.

Belongs to the agmatine deiminase family. In terms of assembly, homodimer.

The enzyme catalyses agmatine + H2O = N-carbamoylputrescine + NH4(+). It functions in the pathway amine and polyamine biosynthesis; putrescine biosynthesis via agmatine pathway; N-carbamoylputrescine from agmatine: step 1/1. Mediates the hydrolysis of agmatine into N-carbamoylputrescine in the arginine decarboxylase (ADC) pathway of putrescine biosynthesis, a basic polyamine. The protein is Agmatine deiminase of Pseudomonas savastanoi pv. phaseolicola (strain 1448A / Race 6) (Pseudomonas syringae pv. phaseolicola (strain 1448A / Race 6)).